A 170-amino-acid polypeptide reads, in one-letter code: uncharacterized protein (170 aa).

3 consecutive transmembrane segments (helical) span residues 31 to 51, 58 to 78, and 133 to 153; these read ILAV…FYIF, LFLI…LLLF, and IDFI…MLLF.

This sequence to M.jannaschii MJ0554 and MJ0587.

It localises to the cell membrane. This is an uncharacterized protein from Methanocaldococcus jannaschii (strain ATCC 43067 / DSM 2661 / JAL-1 / JCM 10045 / NBRC 100440) (Methanococcus jannaschii).